A 325-amino-acid chain; its full sequence is Delta(1)-pyrroline-2-carboxylate reductase (325 aa).

Belongs to the ornithine cyclodeaminase/mu-crystallin family.

It carries out the reaction L-proline + NAD(+) = 1-pyrroline-2-carboxylate + NADH + H(+). The catalysed reaction is L-proline + NADP(+) = 1-pyrroline-2-carboxylate + NADPH + H(+). Catalyzes the reduction of Delta(1)-pyrroline-2-carboxylate (Pyr2C) to L-proline, using preferentially NADPH over NADH as the electron donor. Is likely involved in a degradation pathway that converts trans-3-hydroxy-L-proline (t3LHyp) to L-proline, which allows B.cereus to grow on t3LHyp as a sole carbon source. This Bacillus cereus (strain ATCC 14579 / DSM 31 / CCUG 7414 / JCM 2152 / NBRC 15305 / NCIMB 9373 / NCTC 2599 / NRRL B-3711) protein is Delta(1)-pyrroline-2-carboxylate reductase.